Reading from the N-terminus, the 866-residue chain is Autophagy-related protein 9 (866 aa).

The Cytoplasmic segment spans residues Met-1–Trp-94. The chain crosses the membrane as a helical span at residues Ala-95 to Val-115. The Lumenal portion of the chain corresponds to Asp-116–Thr-153. A helical membrane pass occupies residues Leu-154–Phe-174. The Cytoplasmic portion of the chain corresponds to Leu-175 to Arg-319. An intramembrane segment occupies Leu-320–Val-340. Topologically, residues Tyr-341–Ser-404 are cytoplasmic. A helical transmembrane segment spans residues Ile-405 to Ala-425. Residues Phe-426–Glu-433 are Lumenal-facing. The chain crosses the membrane as a helical span at residues Gly-434–Ile-454. The Cytoplasmic portion of the chain corresponds to Ser-455–Gly-507. Residues Met-508–Val-528 lie within the membrane without spanning it. Topologically, residues Pro-529 to Arg-866 are cytoplasmic. The tract at residues Gln-744–Asn-781 is disordered. A compositionally biased stretch (polar residues) spans Asn-768–Asn-781.

This sequence belongs to the ATG9 family. In terms of assembly, homotrimer; forms a homotrimer with a central pore that forms a path between the two membrane leaflets. Expressed in roots, leaves, stems and flowers.

Its subcellular location is the preautophagosomal structure membrane. Functionally, phospholipid scramblase involved in autophagy by mediating autophagosomal membrane expansion. Cycles between the preautophagosomal structure/phagophore assembly site (PAS) and the cytoplasmic vesicle pool and supplies membrane for the growing autophagosome. Lipid scramblase activity plays a key role in preautophagosomal structure/phagophore assembly by distributing the phospholipids that arrive through ATG2 from the cytoplasmic to the luminal leaflet of the bilayer, thereby driving autophagosomal membrane expansion. In addition to autophagy, also plays a role in necrotic cell death. Plays an essential role in plant nutrient recycling. The polypeptide is Autophagy-related protein 9 (Arabidopsis thaliana (Mouse-ear cress)).